A 133-amino-acid polypeptide reads, in one-letter code: Small ribosomal subunit protein uS11 (133 aa).

It belongs to the universal ribosomal protein uS11 family. As to quaternary structure, part of the 30S ribosomal subunit. Interacts with proteins S7 and S18. Binds to IF-3.

Functionally, located on the platform of the 30S subunit, it bridges several disparate RNA helices of the 16S rRNA. Forms part of the Shine-Dalgarno cleft in the 70S ribosome. This chain is Small ribosomal subunit protein uS11, found in Bordetella avium (strain 197N).